Consider the following 229-residue polypeptide: Ribosome maturation factor RimM (229 aa).

Residues 1–21 form a disordered region; sequence MAGHDSGNAKRGRSPSFGVFV. A PRC barrel domain is found at 148–229; the sequence is ADEFYWVDLI…RVVVDWEADY (82 aa).

The protein belongs to the RimM family. Binds ribosomal protein uS19.

It localises to the cytoplasm. An accessory protein needed during the final step in the assembly of 30S ribosomal subunit, possibly for assembly of the head region. Essential for efficient processing of 16S rRNA. May be needed both before and after RbfA during the maturation of 16S rRNA. It has affinity for free ribosomal 30S subunits but not for 70S ribosomes. This chain is Ribosome maturation factor RimM, found in Burkholderia pseudomallei (strain 1106a).